A 335-amino-acid polypeptide reads, in one-letter code: Protein-arginine kinase (335 aa).

Residues 20–243 enclose the Phosphagen kinase C-terminal domain; sequence IVMSSRIRLA…QQIINEEMQI (224 aa). ATP is bound by residues 23–27, His-81, Arg-114, 165–169, and 196–201; these read SSRIR, RASVM, and RGIYGE.

This sequence belongs to the ATP:guanido phosphotransferase family.

It carries out the reaction L-arginyl-[protein] + ATP = N(omega)-phospho-L-arginyl-[protein] + ADP + H(+). Catalyzes the specific phosphorylation of arginine residues in proteins. In Staphylococcus haemolyticus (strain JCSC1435), this protein is Protein-arginine kinase.